We begin with the raw amino-acid sequence, 602 residues long: Beta-(1--&gt;2)glucan export ATP-binding/permease protein NdvA (602 aa).

One can recognise an ABC transmembrane type-1 domain in the interval 21–306; it reads GWLLAFANLL…VVSFINNVFM (286 aa). 6 helical membrane-spanning segments follow: residues 22-42, 63-83, 141-161, 163-183, 240-262, and 280-300; these read WLLA…PVLF, FLAA…LVAL, EHFA…YLNW, LAIL…FVVR, VLSW…VLAI, and IVMF…VVSF. The ABC transporter domain maps to 340 to 573; it reads VEFNDVTFSY…GGHFAELARA (234 aa). 373-380 provides a ligand contact to ATP; the sequence is GPTGAGKS.

It belongs to the ABC transporter superfamily. Beta-(1--&gt;2)glucan exporter (TC 3.A.1.108.1) family. As to quaternary structure, homodimer.

Its subcellular location is the cell inner membrane. The enzyme catalyses [(1-&gt;2)-beta-D-glucosyl](n)(in) + ATP + H2O = [(1-&gt;2)-beta-D-glucosyl](n)(out) + ADP + phosphate + H(+). Functionally, involved in beta-(1--&gt;2)glucan export. Transmembrane domains (TMD) form a pore in the inner membrane and the ATP-binding domain (NBD) is responsible for energy generation. The polypeptide is Beta-(1--&gt;2)glucan export ATP-binding/permease protein NdvA (Bradyrhizobium diazoefficiens (strain JCM 10833 / BCRC 13528 / IAM 13628 / NBRC 14792 / USDA 110)).